The chain runs to 719 residues: NF-kappa-B inhibitor zeta (719 aa).

The span at 46–81 shows a compositional bias: low complexity; sequence GACDGGCSASGPSAPGSPGSDSSDFSSASSVSSCGA. The disordered stretch occupies residues 46 to 97; that stretch reads GACDGGCSASGPSAPGSPGSDSSDFSSASSVSSCGAVESRPRGGARAERLQV. Basic and acidic residues predominate over residues 84–97; it reads SRPRGGARAERLQV. The OCA domain maps to 108 to 130; the sequence is RGPFQGVRVKNSVKELLLHIRSH. The Nuclear localization signal motif lies at 164–179; that stretch reads KRKGSDSLSDGPACKR. Disordered stretches follow at residues 188-210 and 289-343; these read LTPP…ESKQ and YSPQ…FAPL. Residues 201–210 are compositionally biased toward basic and acidic residues; sequence EDVHHNESKQ. A required for transcriptional activity region spans residues 322–394; the sequence is SYEPHLFGRE…LARPDASSTP (73 aa). The interaction with NFKB1/p50 stretch occupies residues 405–719; that stretch reads GGNPMSTTQL…KSIQQRAPPY (315 aa). 7 ANK repeats span residues 444-473, 480-509, 513-542, 552-581, 583-608, 613-642, and 649-682; these read DGDT…ALHM, NGQS…QVNT, WGRT…GSNQ, DGLT…HSPE, QELL…AVEA, SGRT…CLSF, and NGNT…DPST.

Interacts with NFKB1/p50. Interacts with RELA. Interacts with AKIRIN2.

It is found in the nucleus. Its function is as follows. Involved in regulation of NF-kappa-B transcription factor complexes. Inhibits NF-kappa-B activity without affecting its nuclear translocation upon stimulation. Inhibits DNA-binding of RELA and NFKB1/p50, and of the NF-kappa-B p65-p50 heterodimer and the NF-kappa-B p50-p50 homodimer. Also seems to activate NF-kappa-B-mediated transcription. In vitro, upon association with NFKB1/p50 has transcriptional activation activity and, together with NFKB1/p50 and RELA, is recruited to LCN2 promoters. Promotes transcription of LCN2 and DEFB4. Is recruited to IL-6 promoters and activates IL-6 but decreases TNF-alpha production in response to LPS. Seems to be involved in the induction of inflammatory genes activated through TLR/IL-1 receptor signaling. Involved in the induction of T helper 17 cells (Th17) differentiation upon recognition of antigen by T cell antigen receptor (TCR). The sequence is that of NF-kappa-B inhibitor zeta (NFKBIZ) from Bos taurus (Bovine).